A 382-amino-acid polypeptide reads, in one-letter code: Sialidase (382 aa).

Residue arginine 37 participates in substrate binding. Aspartate 62 (proton acceptor) is an active-site residue. 3 BNR repeats span residues 71 to 82 (ARSTDFGKTWSY), 140 to 151 (IYSDDNGLTWSN), and 208 to 219 (IYSKDNGETWTM). Residue arginine 245 coordinates substrate. Residues 255-266 (YISHDLGTTWEI) form a BNR 4 repeat. Residue tyrosine 347 is the Nucleophile of the active site.

The protein belongs to the glycosyl hydrolase 33 family.

It localises to the secreted. It catalyses the reaction Hydrolysis of alpha-(2-&gt;3)-, alpha-(2-&gt;6)-, alpha-(2-&gt;8)- glycosidic linkages of terminal sialic acid residues in oligosaccharides, glycoproteins, glycolipids, colominic acid and synthetic substrates.. In terms of biological role, sialidases have been suggested to be pathogenic factors in microbial infections. The protein is Sialidase (nanH) of Clostridium perfringens.